Reading from the N-terminus, the 227-residue chain is Phosphoribosylformylglycinamidine synthase subunit PurQ (227 aa).

The Glutamine amidotransferase type-1 domain maps to 3-227 (SSVITFPGSN…FFQNLINNLK (225 aa)). Residue cysteine 85 is the Nucleophile of the active site. Active-site residues include histidine 201 and glutamate 203.

Part of the FGAM synthase complex composed of 1 PurL, 1 PurQ and 2 PurS subunits.

Its subcellular location is the cytoplasm. The enzyme catalyses N(2)-formyl-N(1)-(5-phospho-beta-D-ribosyl)glycinamide + L-glutamine + ATP + H2O = 2-formamido-N(1)-(5-O-phospho-beta-D-ribosyl)acetamidine + L-glutamate + ADP + phosphate + H(+). It carries out the reaction L-glutamine + H2O = L-glutamate + NH4(+). It functions in the pathway purine metabolism; IMP biosynthesis via de novo pathway; 5-amino-1-(5-phospho-D-ribosyl)imidazole from N(2)-formyl-N(1)-(5-phospho-D-ribosyl)glycinamide: step 1/2. Part of the phosphoribosylformylglycinamidine synthase complex involved in the purines biosynthetic pathway. Catalyzes the ATP-dependent conversion of formylglycinamide ribonucleotide (FGAR) and glutamine to yield formylglycinamidine ribonucleotide (FGAM) and glutamate. The FGAM synthase complex is composed of three subunits. PurQ produces an ammonia molecule by converting glutamine to glutamate. PurL transfers the ammonia molecule to FGAR to form FGAM in an ATP-dependent manner. PurS interacts with PurQ and PurL and is thought to assist in the transfer of the ammonia molecule from PurQ to PurL. In Pelagibacter ubique (strain HTCC1062), this protein is Phosphoribosylformylglycinamidine synthase subunit PurQ.